Consider the following 365-residue polypeptide: Uroporphyrinogen decarboxylase (365 aa).

Residues 27–31 (RQAGR), aspartate 77, tyrosine 154, serine 209, and histidine 327 contribute to the substrate site.

The protein belongs to the uroporphyrinogen decarboxylase family. Homodimer.

The protein localises to the cytoplasm. It catalyses the reaction uroporphyrinogen III + 4 H(+) = coproporphyrinogen III + 4 CO2. It functions in the pathway porphyrin-containing compound metabolism; protoporphyrin-IX biosynthesis; coproporphyrinogen-III from 5-aminolevulinate: step 4/4. Catalyzes the decarboxylation of four acetate groups of uroporphyrinogen-III to yield coproporphyrinogen-III. This Alkalilimnicola ehrlichii (strain ATCC BAA-1101 / DSM 17681 / MLHE-1) protein is Uroporphyrinogen decarboxylase.